We begin with the raw amino-acid sequence, 249 residues long: Tumor necrosis factor receptor superfamily member 13B (249 aa).

Topologically, residues 1 to 128 (MAMAFCPKDQ…LSSDQLTLYC (128 aa)) are extracellular. TNFR-Cys repeat units lie at residues 5–38 (FCPKDQYWDSSRKSCVSCALTCSQRSQRTCTDFC) and 42–76 (NCRKEQGRYYDHLLGACVSCDSTCTQHPQQCAHFC). Disulfide bonds link Cys6–Cys19, Cys22–Cys34, Cys26–Cys38, Cys43–Cys58, Cys61–Cys72, and Cys65–Cys76. Residues 86–116 (LQPELGRPQAGEVEVRSDNSGRHQGSEHGPG) are disordered. Residues 98 to 111 (VEVRSDNSGRHQGS) are compositionally biased toward basic and acidic residues. The helical; Signal-anchor for type III membrane protein transmembrane segment at 129–149 (TLGVCLCAIFCCFLVALASFL) threads the bilayer. The Cytoplasmic portion of the chain corresponds to 150 to 249 (RRRGEPLPSQ…ASTGDARPAT (100 aa)). Residues 156–176 (LPSQPAGPRGSQANSPHAHRP) are disordered.

Binds TRAF2, TRAF5 and TRAF6. Binds the NH2-terminal domain of CAMLG with its C-terminus.

It is found in the membrane. Functionally, receptor for TNFSF13/APRIL and TNFSF13B/TALL1/BAFF/BLYS that binds both ligands with similar high affinity. Mediates calcineurin-dependent activation of NF-AT, as well as activation of NF-kappa-B and AP-1. Involved in the stimulation of B- and T-cell function and the regulation of humoral immunity. This is Tumor necrosis factor receptor superfamily member 13B (Tnfrsf13b) from Mus musculus (Mouse).